Here is a 380-residue protein sequence, read N- to C-terminus: 2-aminoethylphosphonate--pyruvate transaminase (380 aa).

N6-(pyridoxal phosphate)lysine is present on Lys204.

It belongs to the class-V pyridoxal-phosphate-dependent aminotransferase family. PhnW subfamily. As to quaternary structure, homodimer. The cofactor is pyridoxal 5'-phosphate.

It catalyses the reaction (2-aminoethyl)phosphonate + pyruvate = phosphonoacetaldehyde + L-alanine. Functionally, involved in phosphonate degradation. In Aeromonas hydrophila subsp. hydrophila (strain ATCC 7966 / DSM 30187 / BCRC 13018 / CCUG 14551 / JCM 1027 / KCTC 2358 / NCIMB 9240 / NCTC 8049), this protein is 2-aminoethylphosphonate--pyruvate transaminase.